A 503-amino-acid polypeptide reads, in one-letter code: ATP synthase subunit beta (503 aa).

Residue 157–164 participates in ATP binding; that stretch reads GGAGVGKT.

Belongs to the ATPase alpha/beta chains family. F-type ATPases have 2 components, CF(1) - the catalytic core - and CF(0) - the membrane proton channel. CF(1) has five subunits: alpha(3), beta(3), gamma(1), delta(1), epsilon(1). CF(0) has three main subunits: a(1), b(2) and c(9-12). The alpha and beta chains form an alternating ring which encloses part of the gamma chain. CF(1) is attached to CF(0) by a central stalk formed by the gamma and epsilon chains, while a peripheral stalk is formed by the delta and b chains.

It localises to the cell inner membrane. The catalysed reaction is ATP + H2O + 4 H(+)(in) = ADP + phosphate + 5 H(+)(out). In terms of biological role, produces ATP from ADP in the presence of a proton gradient across the membrane. The catalytic sites are hosted primarily by the beta subunits. The polypeptide is ATP synthase subunit beta (Flavobacterium psychrophilum (strain ATCC 49511 / DSM 21280 / CIP 103535 / JIP02/86)).